A 560-amino-acid polypeptide reads, in one-letter code: Solute carrier family 49 member A3 (560 aa).

12 consecutive transmembrane segments (helical) span residues 30-50 (WVFL…WLSF), 70-90 (WLSL…IWIL), 100-120 (ILGA…CMVV), 125-145 (PFAF…LVIF), 166-186 (LATM…PVLV), 192-212 (IPLM…LSTI), 250-270 (VILA…SALL), 282-302 (GFSG…ALAL), 318-338 (IGLC…QLQG), 341-361 (LALA…GPVA), 379-399 (GMIF…MTAL), and 422-442 (VSLL…AVFF). Positions 451-540 (AESGEPPSTR…PGRLAGRVQA (90 aa)) are disordered. Gly residues predominate over residues 466 to 481 (ADSGPGVDRGGAGRAG).

This sequence belongs to the major facilitator superfamily.

The protein resides in the membrane. This is Solute carrier family 49 member A3 from Homo sapiens (Human).